The sequence spans 371 residues: Chitin deacetylase (371 aa).

An N-terminal signal peptide occupies residues 1–20; it reads MLCRLFTLFITAALACCVAA. A disordered region spans residues 73 to 112; it reads PKPEPEPTAVPTMAPEPTTVPPTEPSGTYPPETTPTVEPT. 2 stretches are compositionally biased toward low complexity: residues 79 to 89 and 102 to 112; these read PTAVPTMAPEP and PPETTPTVEPT. Cysteine 164 and cysteine 358 are joined by a disulfide. Residue asparagine 167 is glycosylated (N-linked (GlcNAc...) asparagine). In terms of domain architecture, NodB homology spans 168-353; that stretch reads GTIALTFDDG…EIKKRGLRAV (186 aa). The active-site Proton acceptor is the aspartate 175. An acetate-binding site is contributed by aspartate 175. The Co(2+) site is built by aspartate 176, histidine 228, and histidine 232. Asparagine 239 is a glycosylation site (N-linked (GlcNAc...) asparagine). An acetate-binding site is contributed by tyrosine 270. Histidine 327 serves as the catalytic Proton donor.

This sequence belongs to the polysaccharide deacetylase family. Co(2+) serves as cofactor.

It catalyses the reaction [(1-&gt;4)-N-acetyl-beta-D-glucosaminyl](n) + n H2O = chitosan + n acetate. In terms of biological role, hydrolyzes the N-acetamido groups of N-acetyl-D-glucosamine residues in chitin to form chitosan and acetate. The polypeptide is Chitin deacetylase (Arthroderma benhamiae (strain ATCC MYA-4681 / CBS 112371) (Trichophyton mentagrophytes)).